The chain runs to 165 residues: Nucleotide-binding protein P9515_05441 (165 aa).

The protein belongs to the YajQ family.

Functionally, nucleotide-binding protein. This is Nucleotide-binding protein P9515_05441 from Prochlorococcus marinus (strain MIT 9515).